The following is a 248-amino-acid chain: DNA repair protein RecO (248 aa).

It belongs to the RecO family.

In terms of biological role, involved in DNA repair and RecF pathway recombination. The polypeptide is DNA repair protein RecO (Oleidesulfovibrio alaskensis (strain ATCC BAA-1058 / DSM 17464 / G20) (Desulfovibrio alaskensis)).